Reading from the N-terminus, the 217-residue chain is 3,4-dihydroxy-2-butanone 4-phosphate synthase (217 aa).

Residues 37 to 38 (RE), Asp42, 150 to 154 (RGGHT), and Glu174 contribute to the D-ribulose 5-phosphate site. Glu38 serves as a coordination point for Mg(2+). A Mg(2+)-binding site is contributed by His153.

Belongs to the DHBP synthase family. Homodimer. Mg(2+) serves as cofactor. The cofactor is Mn(2+).

The catalysed reaction is D-ribulose 5-phosphate = (2S)-2-hydroxy-3-oxobutyl phosphate + formate + H(+). The protein operates within cofactor biosynthesis; riboflavin biosynthesis; 2-hydroxy-3-oxobutyl phosphate from D-ribulose 5-phosphate: step 1/1. Catalyzes the conversion of D-ribulose 5-phosphate to formate and 3,4-dihydroxy-2-butanone 4-phosphate. This chain is 3,4-dihydroxy-2-butanone 4-phosphate synthase, found in Citrobacter koseri (strain ATCC BAA-895 / CDC 4225-83 / SGSC4696).